Here is a 252-residue protein sequence, read N- to C-terminus: Imidazole glycerol phosphate synthase subunit HisF (252 aa).

Active-site residues include aspartate 11 and aspartate 130.

Belongs to the HisA/HisF family. In terms of assembly, heterodimer of HisH and HisF.

The protein localises to the cytoplasm. The catalysed reaction is 5-[(5-phospho-1-deoxy-D-ribulos-1-ylimino)methylamino]-1-(5-phospho-beta-D-ribosyl)imidazole-4-carboxamide + L-glutamine = D-erythro-1-(imidazol-4-yl)glycerol 3-phosphate + 5-amino-1-(5-phospho-beta-D-ribosyl)imidazole-4-carboxamide + L-glutamate + H(+). The protein operates within amino-acid biosynthesis; L-histidine biosynthesis; L-histidine from 5-phospho-alpha-D-ribose 1-diphosphate: step 5/9. Its function is as follows. IGPS catalyzes the conversion of PRFAR and glutamine to IGP, AICAR and glutamate. The HisF subunit catalyzes the cyclization activity that produces IGP and AICAR from PRFAR using the ammonia provided by the HisH subunit. The chain is Imidazole glycerol phosphate synthase subunit HisF from Bacillus licheniformis (strain ATCC 14580 / DSM 13 / JCM 2505 / CCUG 7422 / NBRC 12200 / NCIMB 9375 / NCTC 10341 / NRRL NRS-1264 / Gibson 46).